The following is a 375-amino-acid chain: Alanine racemase (375 aa).

Lys-40 (proton acceptor; specific for D-alanine) is an active-site residue. Position 40 is an N6-(pyridoxal phosphate)lysine (Lys-40). Arg-140 serves as a coordination point for substrate. Residue Tyr-268 is the Proton acceptor; specific for L-alanine of the active site. Residue Met-315 participates in substrate binding.

Belongs to the alanine racemase family. It depends on pyridoxal 5'-phosphate as a cofactor.

The catalysed reaction is L-alanine = D-alanine. Its pathway is amino-acid biosynthesis; D-alanine biosynthesis; D-alanine from L-alanine: step 1/1. Functionally, catalyzes the interconversion of L-alanine and D-alanine. May also act on other amino acids. The polypeptide is Alanine racemase (alr) (Limosilactobacillus reuteri (strain DSM 20016) (Lactobacillus reuteri)).